Here is a 196-residue protein sequence, read N- to C-terminus: Putative NADH dehydrogenase/NAD(P)H nitroreductase Reut_A1586 (196 aa).

This sequence belongs to the nitroreductase family. HadB/RutE subfamily. FMN is required as a cofactor.

The sequence is that of Putative NADH dehydrogenase/NAD(P)H nitroreductase Reut_A1586 from Cupriavidus pinatubonensis (strain JMP 134 / LMG 1197) (Cupriavidus necator (strain JMP 134)).